The sequence spans 631 residues: Peptidyl-prolyl cis-trans isomerase CYP71 (631 aa).

Positions 26 to 45 (VEEEEPMVGPGPAPRGKRKR) are disordered. WD repeat units lie at residues 68–106 (MHRDVVTHVAVSAAEFFISGSMDGHLKFWKKKGVGIEFA), 111–150 (SHLGPIEGLAVSIDGLLCCTISNDHAVKIYDVVNYDMMAM), 201–240 (IHMNPIKVMKYNPVSDTMISGDTKGIIEYWSATTLQFPED), and 257–297 (KCKT…RRVY). The PPIase cyclophilin-type domain occupies 474-628 (LPENVIMHTT…QDVKILNVTV (155 aa)).

Belongs to the cyclophilin-type PPIase family. Interacts with FAS1 and LHP1. Interacts (via WD repeat domain) with histone H3. Ubiquitous. Expressed in the meristems.

The protein localises to the nucleus. The catalysed reaction is [protein]-peptidylproline (omega=180) = [protein]-peptidylproline (omega=0). Functionally, PPIases accelerate the folding of proteins. It catalyzes the cis-trans isomerization of proline imidic peptide bonds in oligopeptides. Histone proline isomerase that increases the rate of cis-trans isomerization of the synthetic histone H3 peptides H3P30 (RKSAP30F-p-nitroanilide) and H3P30K27me3 (RKme3-SAP30F-p-nitroanilide) in the histone H3 N-terminal tail, in vitro. Histone remodeling factor involved in chromatin-based gene silencing. Reinforces H3K27 methylation. Involved in fundamental processes of chromatin assembly and histone modification by mediating the targeting of FAS1 and LHP1 on the chromatin. Required for the formation and development of leaves, for normal phyllotaxy and for the formation, maintenance and activity of root and shoot apical meristems. The protein is Peptidyl-prolyl cis-trans isomerase CYP71 of Arabidopsis thaliana (Mouse-ear cress).